The sequence spans 317 residues: Ribose-phosphate pyrophosphokinase (317 aa).

Residues 43–45 (DGE) and 102–103 (RQ) contribute to the ATP site. Residues H136 and D175 each contribute to the Mg(2+) site. K198 is an active-site residue. Residues R200, D224, and 228-232 (DTAGT) contribute to the D-ribose 5-phosphate site.

It belongs to the ribose-phosphate pyrophosphokinase family. Class I subfamily. As to quaternary structure, homohexamer. Mg(2+) is required as a cofactor.

It is found in the cytoplasm. It carries out the reaction D-ribose 5-phosphate + ATP = 5-phospho-alpha-D-ribose 1-diphosphate + AMP + H(+). It participates in metabolic intermediate biosynthesis; 5-phospho-alpha-D-ribose 1-diphosphate biosynthesis; 5-phospho-alpha-D-ribose 1-diphosphate from D-ribose 5-phosphate (route I): step 1/1. Involved in the biosynthesis of the central metabolite phospho-alpha-D-ribosyl-1-pyrophosphate (PRPP) via the transfer of pyrophosphoryl group from ATP to 1-hydroxyl of ribose-5-phosphate (Rib-5-P). The chain is Ribose-phosphate pyrophosphokinase from Bacillus anthracis.